We begin with the raw amino-acid sequence, 200 residues long: Glutathione peroxidase 1 (200 aa).

S31 carries the post-translational modification Phosphoserine. U46 is a catalytic residue. A non-standard amino acid (selenocysteine) is located at residue U46. 2 positions are modified to N6-acetyllysine; alternate: K85 and K111. K85 and K111 each carry N6-succinyllysine; alternate. K118 carries the N6-acetyllysine modification. K145 carries the post-translational modification N6-acetyllysine; alternate. K145 is subject to N6-succinyllysine; alternate. Residue S194 is modified to Phosphoserine.

This sequence belongs to the glutathione peroxidase family. As to quaternary structure, homotetramer. Interacts with MIEN1. Post-translationally, during periods of oxidative stress, Sec-46 may react with a superoxide radical, irreversibly lose hydroselenide and be converted to dehydroalanine.

The protein resides in the cytoplasm. The protein localises to the mitochondrion. The catalysed reaction is 2 glutathione + H2O2 = glutathione disulfide + 2 H2O. It carries out the reaction a hydroperoxy polyunsaturated fatty acid + 2 glutathione = a hydroxy polyunsaturated fatty acid + glutathione disulfide + H2O. The enzyme catalyses tert-butyl hydroperoxide + 2 glutathione = tert-butanol + glutathione disulfide + H2O. It catalyses the reaction cumene hydroperoxide + 2 glutathione = 2-phenylpropan-2-ol + glutathione disulfide + H2O. The catalysed reaction is (13S)-hydroperoxy-(9Z,11E)-octadecadienoate + 2 glutathione = (13S)-hydroxy-(9Z,11E)-octadecadienoate + glutathione disulfide + H2O. It carries out the reaction (9S)-hydroperoxy-(10E,12Z)-octadecadienoate + 2 glutathione = (9S)-hydroxy-(10E,12Z)-octadecadienoate + glutathione disulfide + H2O. The enzyme catalyses (5S)-hydroperoxy-(6E,8Z,11Z,14Z)-eicosatetraenoate + 2 glutathione = (5S)-hydroxy-(6E,8Z,11Z,14Z)-eicosatetraenoate + glutathione disulfide + H2O. It catalyses the reaction (12S)-hydroperoxy-(5Z,8Z,10E,14Z)-eicosatetraenoate + 2 glutathione = (12S)-hydroxy-(5Z,8Z,10E,14Z)-eicosatetraenoate + glutathione disulfide + H2O. The catalysed reaction is (12R)-hydroperoxy-(5Z,8Z,10E,14Z)-eicosatetraenoate + 2 glutathione = (12R)-hydroxy-(5Z,8Z,10E,14Z)-eicosatetraenoate + glutathione disulfide + H2O. It carries out the reaction (15S)-hydroperoxy-(5Z,8Z,11Z,13E)-eicosatetraenoate + 2 glutathione = (15S)-hydroxy-(5Z,8Z,11Z,13E)-eicosatetraenoate + glutathione disulfide + H2O. The enzyme catalyses (5S)-hydroperoxy-(6E,8Z,11Z,14Z,17Z)-eicosapentaenoate + 2 glutathione = (5S)-hydroxy-(6E,8Z,11Z,14Z,17Z)-eicosapentaenoate + glutathione disulfide + H2O. It catalyses the reaction (12S)-hydroperoxy-(5Z,8Z,10E,14Z,17Z)-eicosapentaenoate + 2 glutathione = (12S)-hydroxy-(5Z,8Z,10E,14Z,17Z)-eicosapentaenoate + glutathione disulfide + H2O. The catalysed reaction is (15S)-hydroperoxy-(5Z,8Z,11Z,13E,17Z)-eicosapentaenoate + 2 glutathione = (15S)-hydroxy-(5Z,8Z,11Z,13E,17Z)-eicosapentaenoate + glutathione disulfide + H2O. It carries out the reaction (15S)-hydroperoxy-(11Z,13E)-eicosadienoate + 2 glutathione = (15S)-hydroxy-(11Z,13E)-eicosadienoate + glutathione disulfide + H2O. The enzyme catalyses (17S)-hydroperoxy-(4Z,7Z,10Z,13Z,15E,19Z)-docosahexaenoate + 2 glutathione = (17S)-hydroxy-(4Z,7Z,10Z,13Z,15E,19Z)-docosahexaenoate + glutathione disulfide + H2O. Catalyzes the reduction of hydroperoxides in a glutathione-dependent manner thus regulating cellular redox homeostasis. Can reduce small soluble hydroperoxides such as H2O2, cumene hydroperoxide and tert-butyl hydroperoxide, as well as several fatty acid-derived hydroperoxides. In platelets catalyzes the reduction of 12-hydroperoxyeicosatetraenoic acid, the primary product of the arachidonate 12-lipoxygenase pathway. The chain is Glutathione peroxidase 1 (GPX1) from Oryctolagus cuniculus (Rabbit).